The primary structure comprises 1194 residues: IQ motif and SEC7 domain-containing protein 3 (1194 aa).

Residues A20–H56 adopt a coiled-coil conformation. Disordered stretches follow at residues A62–R149 and G229–A272. A compositionally biased stretch (pro residues) spans Q63–A78. The segment covering P79–P92 has biased composition (low complexity). Over residues P122–H133 the composition is skewed to polar residues. S255 bears the Phosphoserine mark. The IQ domain occupies S311–E340. Disordered stretches follow at residues S439–S471 and P515–K610. 2 stretches are compositionally biased toward low complexity: residues V561–T572 and S600–K610. The 194-residue stretch at T646 to K839 folds into the SEC7 domain. The region spanning T852–E985 is the PH domain. Disordered regions lie at residues K1002 to P1099 and S1137 to C1175. Over residues A1024–T1035 the composition is skewed to basic and acidic residues. Polar residues predominate over residues E1036–H1052. Composition is skewed to pro residues over residues A1064–P1099 and P1159–N1169.

Belongs to the BRAG family. As to quaternary structure, interacts with DLG1 and DLG4. Interacts with GPHN. In terms of tissue distribution, expressed in brain. Localized to dendrites, as well as somas of neuronal cells.

Its subcellular location is the cytoplasm. The protein localises to the postsynaptic density. In terms of biological role, acts as a guanine nucleotide exchange factor (GEF) for ARF1. The sequence is that of IQ motif and SEC7 domain-containing protein 3 (Iqsec3) from Rattus norvegicus (Rat).